The sequence spans 344 residues: Beta-1,4-galactosyltransferase 4 (344 aa).

Residues 1–12 (MGCNPPYLLPYR) lie on the Cytoplasmic side of the membrane. A helical; Signal-anchor for type II membrane protein membrane pass occupies residues 13-38 (LRLLLFFTLCLTVVGWVTSNYFVDPI). The Lumenal segment spans residues 39–344 (QVIPKAKVFM…NITVDFWTGV (306 aa)). Cysteines 77 and 118 form a disulfide. Residues 129–133 (PHRNR), 168–170 (FNR), and 195–196 (VD) each bind UDP-alpha-D-galactose. A disulfide bridge links C189 with C208. Position 196 (D196) interacts with Mn(2+). A glycan (N-linked (GlcNAc...) asparagine) is linked at N220. Residues Y224 and W256 each contribute to the UDP-alpha-D-galactose site. 258–261 (GEDD) provides a ligand contact to N-acetyl-D-glucosamine. A Mn(2+)-binding site is contributed by H289. 289-291 (HTR) serves as a coordination point for UDP-alpha-D-galactose. R301 provides a ligand contact to N-acetyl-D-glucosamine. N-linked (GlcNAc...) asparagine glycosylation occurs at N335.

This sequence belongs to the glycosyltransferase 7 family. Mn(2+) serves as cofactor.

The protein localises to the golgi apparatus. The protein resides in the golgi stack membrane. The catalysed reaction is N-acetyl-D-glucosamine + UDP-alpha-D-galactose = beta-D-galactosyl-(1-&gt;4)-N-acetyl-D-glucosamine + UDP + H(+). It catalyses the reaction a beta-D-GlcNAc-(1-&gt;3)-beta-D-Gal-(1-&gt;4)-beta-D-Glc-(1&lt;-&gt;1)-Cer(d18:1(4E)) + UDP-alpha-D-galactose = a neolactoside nLc4Cer(d18:1(4E)) + UDP + H(+). The protein operates within protein modification; protein glycosylation. Its function is as follows. Galactose (Gal) transferase involved in the biosynthesis of glycoproteins, proteoglycans, and glycosyphingolipids. Catalyzes the transfer of Gal residue via a beta1-&gt;4 linkage from UDP-Gal to the non-reducing terminal N-acetyl glucosamine 6-O-sulfate (6-O-sulfoGlcNAc) in the linearly growing chain of both N- and O-linked keratan sulfate proteoglycans. Cooperates with B3GNT7 N-acetyl glucosamine transferase and CHST6 and CHST1 sulfotransferases to construct and elongate mono- and disulfated disaccharide units [-&gt;3Galbeta1-&gt;4(6-sulfoGlcNAcbeta)1-&gt;] and [-&gt;3(6-sulfoGalbeta)1-&gt;4(6-sulfoGlcNAcbeta)1-&gt;] within keratan sulfate polymer. This Cricetulus griseus (Chinese hamster) protein is Beta-1,4-galactosyltransferase 4 (B4GALT4).